A 446-amino-acid chain; its full sequence is tRNA modification GTPase MnmE (446 aa).

The (6S)-5-formyl-5,6,7,8-tetrahydrofolate site is built by arginine 22, glutamate 80, and lysine 119. One can recognise a TrmE-type G domain in the interval 215–370 (GLSLVIAGRP…LKKVIKQVVG (156 aa)). K(+) is bound at residue asparagine 225. GTP-binding positions include 225–230 (NAGKST), 244–250 (TEIAGTT), and 269–272 (DTAG). Residue serine 229 participates in Mg(2+) binding. K(+) contacts are provided by threonine 244, isoleucine 246, and threonine 249. Threonine 250 is a binding site for Mg(2+). Position 446 (lysine 446) interacts with (6S)-5-formyl-5,6,7,8-tetrahydrofolate.

Belongs to the TRAFAC class TrmE-Era-EngA-EngB-Septin-like GTPase superfamily. TrmE GTPase family. Homodimer. Heterotetramer of two MnmE and two MnmG subunits. K(+) serves as cofactor.

The protein localises to the cytoplasm. Functionally, exhibits a very high intrinsic GTPase hydrolysis rate. Involved in the addition of a carboxymethylaminomethyl (cmnm) group at the wobble position (U34) of certain tRNAs, forming tRNA-cmnm(5)s(2)U34. The chain is tRNA modification GTPase MnmE from Legionella pneumophila (strain Corby).